Consider the following 106-residue polypeptide: Small ribosomal subunit protein uS10 (106 aa).

The protein belongs to the universal ribosomal protein uS10 family. Part of the 30S ribosomal subunit.

Its function is as follows. Involved in the binding of tRNA to the ribosomes. The protein is Small ribosomal subunit protein uS10 of Prochlorococcus marinus subsp. pastoris (strain CCMP1986 / NIES-2087 / MED4).